The sequence spans 325 residues: Phenylalanine--tRNA ligase alpha subunit (325 aa).

Glu251 lines the Mg(2+) pocket.

The protein belongs to the class-II aminoacyl-tRNA synthetase family. Phe-tRNA synthetase alpha subunit type 1 subfamily. Tetramer of two alpha and two beta subunits. The cofactor is Mg(2+).

The protein resides in the cytoplasm. The enzyme catalyses tRNA(Phe) + L-phenylalanine + ATP = L-phenylalanyl-tRNA(Phe) + AMP + diphosphate + H(+). This chain is Phenylalanine--tRNA ligase alpha subunit, found in Thermotoga petrophila (strain ATCC BAA-488 / DSM 13995 / JCM 10881 / RKU-1).